We begin with the raw amino-acid sequence, 163 residues long: Glycine cleavage system H protein, mitochondrial (163 aa).

A mitochondrion-targeting transit peptide spans 1–34 (MALRMWASSAANALGVSCAPKSHLLPALSLSRCF). Residues 56–137 (VATIGITDHA…YEEGWMVKVK (82 aa)) form the Lipoyl-binding domain. Lys96 is modified (N6-lipoyllysine).

The protein belongs to the GcvH family. As to quaternary structure, the glycine cleavage system is composed of four proteins: P, T, L and H. It depends on (R)-lipoate as a cofactor.

It localises to the mitochondrion. In terms of biological role, the glycine cleavage system catalyzes the degradation of glycine. The H protein shuttles the methylamine group of glycine from the P protein to the T protein. The chain is Glycine cleavage system H protein, mitochondrial (GDCSH) from Mesembryanthemum crystallinum (Common ice plant).